The following is a 190-amino-acid chain: Peptide methionine sulfoxide reductase A2-2 (190 aa).

The segment at 1–20 (MSNDTGADGGAANPDLGPDA) is disordered. Residues 10–20 (GAANPDLGPDA) are compositionally biased toward low complexity.

Belongs to the MsrA Met sulfoxide reductase family.

It is found in the cytoplasm. The protein localises to the cytosol. It carries out the reaction L-methionyl-[protein] + [thioredoxin]-disulfide + H2O = L-methionyl-(S)-S-oxide-[protein] + [thioredoxin]-dithiol. The catalysed reaction is [thioredoxin]-disulfide + L-methionine + H2O = L-methionine (S)-S-oxide + [thioredoxin]-dithiol. Catalyzes the reduction of methionine sulfoxide (MetSO) to methionine in proteins. Plays a protective role against oxidative stress by restoring activity to proteins that have been inactivated by methionine oxidation. MSRA family specifically reduces the MetSO S-enantiomer. The polypeptide is Peptide methionine sulfoxide reductase A2-2 (MSRA2-2) (Oryza sativa subsp. japonica (Rice)).